Consider the following 487-residue polypeptide: Probable cytosol aminopeptidase (487 aa).

Lys253 and Asp258 together coordinate Mn(2+). Lys265 is an active-site residue. 3 residues coordinate Mn(2+): Asp277, Asp337, and Glu339. The active site involves Arg341.

It belongs to the peptidase M17 family. Requires Mn(2+) as cofactor.

It is found in the cytoplasm. It catalyses the reaction Release of an N-terminal amino acid, Xaa-|-Yaa-, in which Xaa is preferably Leu, but may be other amino acids including Pro although not Arg or Lys, and Yaa may be Pro. Amino acid amides and methyl esters are also readily hydrolyzed, but rates on arylamides are exceedingly low.. The enzyme catalyses Release of an N-terminal amino acid, preferentially leucine, but not glutamic or aspartic acids.. In terms of biological role, presumably involved in the processing and regular turnover of intracellular proteins. Catalyzes the removal of unsubstituted N-terminal amino acids from various peptides. This Parasynechococcus marenigrum (strain WH8102) protein is Probable cytosol aminopeptidase.